The following is a 366-amino-acid chain: Putative [LysW]-aminoadipate semialdehyde/glutamate semialdehyde transaminase (366 aa).

Pyridoxal 5'-phosphate contacts are provided by residues 90–91 (GT) and Phe-117. Arg-120 contacts substrate. 202 to 205 (DEVQ) contacts pyridoxal 5'-phosphate. Lys-230 is modified (N6-(pyridoxal phosphate)lysine). Substrate is bound at residue Ser-254. A pyridoxal 5'-phosphate-binding site is contributed by Thr-255.

Belongs to the class-III pyridoxal-phosphate-dependent aminotransferase family. LysJ subfamily. As to quaternary structure, homodimer. The cofactor is pyridoxal 5'-phosphate.

It is found in the cytoplasm. The catalysed reaction is [amino-group carrier protein]-C-terminal-gamma-(L-lysyl)-L-glutamate + 2-oxoglutarate = [amino-group carrier protein]-C-terminal-N-(1-carboxy-5-oxopentan-1-yl)-L-glutamine + L-glutamate. It catalyses the reaction [amino-group carrier protein]-C-terminal-gamma-(L-ornithyl)-L-glutamate + 2-oxoglutarate = [amino-group carrier protein]-C-terminal-gamma-(L-glutamyl-5-semialdehyde)-L-glutamate + L-glutamate. Its pathway is amino-acid biosynthesis; L-lysine biosynthesis via AAA pathway; L-lysine from L-alpha-aminoadipate (Thermus route): step 4/5. The protein operates within amino-acid biosynthesis; L-arginine biosynthesis. In terms of biological role, involved in both the arginine and lysine biosynthetic pathways. This chain is Putative [LysW]-aminoadipate semialdehyde/glutamate semialdehyde transaminase, found in Pyrococcus horikoshii (strain ATCC 700860 / DSM 12428 / JCM 9974 / NBRC 100139 / OT-3).